A 635-amino-acid chain; its full sequence is Frizzled and smoothened-like protein C (635 aa).

Residues 1–20 (MKFKLIIFIIIIYIIKILKS) form the signal peptide. The Extracellular segment spans residues 21-244 (EILNEFGYGL…NKWVQMYKMS (224 aa)). The region spanning 32–166 (DENLKCLSFI…LTKYGYTENN (135 aa)) is the FZ domain. 2 disulfides stabilise this stretch: cysteine 37-cysteine 108 and cysteine 50-cysteine 101. Asparagine 65, asparagine 141, asparagine 156, asparagine 185, and asparagine 203 each carry an N-linked (GlcNAc...) asparagine glycan. A helical membrane pass occupies residues 245 to 265 (IVLSTLSFICSIYNIITFGLL). The Cytoplasmic segment spans residues 266 to 275 (SKLKSKYNLC). The chain crosses the membrane as a helical span at residues 276-296 (ITFFSVSTVLMSLMDIVTYGI). The Extracellular portion of the chain corresponds to 297 to 314 (GYEELLCPESGRYAIQSD). The chain crosses the membrane as a helical span at residues 315–335 (VACGVTGAFFHIGITTGVLWW). Over 336–356 (TTMSICLYSEVKRFKMISFRY) the chain is Cytoplasmic. A helical membrane pass occupies residues 357–377 (IIIFNSVISLILLIIPLSGQA). Topologically, residues 378-398 (FMSGNGSLGCWIRKTWYANGT) are extracellular. 2 N-linked (GlcNAc...) asparagine glycosylation sites follow: asparagine 382 and asparagine 396. Residues 399-419 (FWIPCGISLFIGAICIVLVIY) form a helical membrane-spanning segment. Residues 420-440 (EIFKISRNLSKDNKPLMFQIR) lie on the Cytoplasmic side of the membrane. The helical transmembrane segment at 441-461 (PFLCVLLVGGSFLYLFIFYFN) threads the bilayer. Residues 462-496 (NERNLDKYKAAIPSYVQCLLSSDENGEDCLTDGPG) lie on the Extracellular side of the membrane. Residues 497-517 (FGAYFTFYFFTRLFGITSFSI) form a helical membrane-spanning segment. The Cytoplasmic portion of the chain corresponds to 518-635 (YGTSKIARDI…SSKDSNTNSF (118 aa)). Residues 559–594 (SISGSNQKRFNRNGSNFNMKQNKSNPNDSISLSVVE) show a composition bias toward polar residues. Residues 559-635 (SISGSNQKRF…SSKDSNTNSF (77 aa)) are disordered. Residues 594 to 623 (ESTKKQDTENELESNIETKENRSTDISIEN) are a coiled coil. Residues 623–635 (NTTSSKDSNTNSF) are compositionally biased toward low complexity.

The protein belongs to the G-protein coupled receptor Fz/Smo family.

It is found in the membrane. The polypeptide is Frizzled and smoothened-like protein C (fslC) (Dictyostelium discoideum (Social amoeba)).